The chain runs to 434 residues: Beta-glucuronosyltransferase GlcAT14B (434 aa).

At 1–21 the chain is on the cytoplasmic side; sequence MKKLKSYYMQVRNQQQSLDRK. Residues 22–42 form a signal-anchor for type II membrane protein membrane-spanning segment; the sequence is WILPLAIGSICSLFLLLLTNL. Residues 43–434 are Lumenal-facing; the sequence is ASSSGQTRLI…TENFRPRQCR (392 aa). N-linked (GlcNAc...) asparagine glycosylation is found at N138, N187, N316, and N392.

Belongs to the glycosyltransferase 14 family.

The protein resides in the golgi apparatus membrane. Beta-glucuronosyltransferase involved in the biosynthesis of type II arabinogalactan (AG). Modifies both the beta-1,6-linked galactan and beta-1,3-linked galactan present in type II AG. The polypeptide is Beta-glucuronosyltransferase GlcAT14B (Arabidopsis thaliana (Mouse-ear cress)).